We begin with the raw amino-acid sequence, 183 residues long: Large ribosomal subunit protein uL6 (183 aa).

The protein belongs to the universal ribosomal protein uL6 family. Part of the 50S ribosomal subunit.

In terms of biological role, this protein binds to the 23S rRNA, and is important in its secondary structure. It is located near the subunit interface in the base of the L7/L12 stalk, and near the tRNA binding site of the peptidyltransferase center. The polypeptide is Large ribosomal subunit protein uL6 (Chlamydia trachomatis serovar A (strain ATCC VR-571B / DSM 19440 / HAR-13)).